Consider the following 938-residue polypeptide: Protein translocase subunit SecA 1 (938 aa).

ATP contacts are provided by residues glutamine 84, 102–106, and aspartate 491; that span reads GEGKT. The segment at 865-938 is disordered; that stretch reads QTGGVATKER…QKTGRHAKRR (74 aa). Over residues 918-927 the composition is skewed to basic and acidic residues; the sequence is TRKERREAAR.

The protein belongs to the SecA family. As to quaternary structure, monomer and homodimer. Part of the essential Sec protein translocation apparatus which comprises SecA, SecYEG and auxiliary proteins SecDF. Other proteins may also be involved.

It is found in the cell membrane. The protein localises to the cytoplasm. It carries out the reaction ATP + H2O + cellular proteinSide 1 = ADP + phosphate + cellular proteinSide 2.. Part of the Sec protein translocase complex. Interacts with the SecYEG preprotein conducting channel. Has a central role in coupling the hydrolysis of ATP to the transfer of proteins into and across the cell membrane, serving as an ATP-driven molecular motor driving the stepwise translocation of polypeptide chains across the membrane. The sequence is that of Protein translocase subunit SecA 1 from Mycolicibacterium vanbaalenii (strain DSM 7251 / JCM 13017 / BCRC 16820 / KCTC 9966 / NRRL B-24157 / PYR-1) (Mycobacterium vanbaalenii).